A 466-amino-acid chain; its full sequence is Alpha-1A adrenergic receptor (466 aa).

Over 1–25 (MVFLSGNASDSSNCTHPPAPVNISK) the chain is Extracellular. Residues Asn-7, Asn-13, and Asn-22 are each glycosylated (N-linked (GlcNAc...) asparagine). A helical membrane pass occupies residues 26–51 (AILLGVILGGLILFGVLGNILVILSV). The Cytoplasmic segment spans residues 52–63 (ACHRHLHSVTHY). Residues 64-89 (YIVNLAVADLLLTSTVLPFSAIFEIL) form a helical membrane-spanning segment. The Extracellular portion of the chain corresponds to 90–99 (GYWAFGRVFC). The helical transmembrane segment at 100–122 (NIWAAVDVLCCTASIISLCVISI) threads the bilayer. Over 123–143 (DRYIGVSYPLRYPTIVTQRRG) the chain is Cytoplasmic. The helical transmembrane segment at 144–168 (LRALLCVWAFSLVISVGPLFGWRQP) threads the bilayer. Topologically, residues 169 to 181 (APDDETICQINEE) are extracellular. The helical transmembrane segment at 182-205 (PGYVLFSALGSFYVPLTIILAMYC) threads the bilayer. Residues 206–272 (RVYVVAKRES…KFSREKKAAK (67 aa)) lie on the Cytoplasmic side of the membrane. The helical transmembrane segment at 273–297 (TLGIVVGCFVLCWLPFFLVMPIGSF) threads the bilayer. Topologically, residues 298-304 (FPDFKPP) are extracellular. Residues 305–329 (ETVFKIVFWLGYLNSCINPIIYPCS) form a helical membrane-spanning segment. The Cytoplasmic portion of the chain corresponds to 330–466 (SQEFKKAFQN…ISLSENGEEV (137 aa)). Positions 334–349 (KKAFQNVLKIQCLRRK) match the Nuclear localization signal motif. Residue Cys-345 is the site of S-palmitoyl cysteine attachment.

It belongs to the G-protein coupled receptor 1 family. Adrenergic receptor subfamily. ADRA1A sub-subfamily. Homo- and heterooligomer. Heterooligomerizes with ADRA1B homooligomers in cardiac myocytes. Interacts with CAVIN4. As to expression, abundant in liver, vas deferens, brain, and aorta, but not in heart.

Its subcellular location is the nucleus membrane. It localises to the cell membrane. The protein resides in the cytoplasm. The protein localises to the membrane. It is found in the caveola. Its function is as follows. This alpha-adrenergic receptor mediates its action by association with G proteins that activate a phosphatidylinositol-calcium second messenger system. Its effect is mediated by G(q) and G(11) proteins. Nuclear ADRA1A-ADRA1B heterooligomers regulate phenylephrine (PE)-stimulated ERK signaling in cardiac myocytes. The polypeptide is Alpha-1A adrenergic receptor (ADRA1A) (Oryctolagus cuniculus (Rabbit)).